The chain runs to 87 residues: RNA-binding protein Hfq (87 aa).

Positions 9-68 (DPFLNTLRRERIPVSIYLVNGIKLQGYIESFDQFVILLKNSISQMIYKHAISTVVPNHTN) constitute a Sm domain. Residues 66–87 (HTNNQEHNQSQYNNNNACISKP) form a disordered region.

It belongs to the Hfq family. As to quaternary structure, homohexamer.

Functionally, RNA chaperone that binds small regulatory RNA (sRNAs) and mRNAs to facilitate mRNA translational regulation in response to envelope stress, environmental stress and changes in metabolite concentrations. Also binds with high specificity to tRNAs. This chain is RNA-binding protein Hfq, found in Wigglesworthia glossinidia brevipalpis.